A 204-amino-acid chain; its full sequence is MIGWLQGRVLYKQNDQLLINVCGVGYELTVPQSVMASAQVGEELTVFVHHVQREDGQFLYGFSSFLQRQLFRELIRVSGIGPKLSIVILSGLTPEALIAAVRAQESAPFLRLSGIGKKTAERLLIELHDRVEKNDLFLCDESESSRAPIALSASEEAIQALIALELAPAEAELWVKKAQKTLAEDADSAALIKTAFALRLQGAK.

Positions 1–63 (MIGWLQGRVL…EDGQFLYGFS (63 aa)) are domain I. Residues 64–142 (SFLQRQLFRE…KNDLFLCDES (79 aa)) form a domain II region. The interval 143–152 (ESSRAPIALS) is flexible linker. Residues 152–204 (SASEEAIQALIALELAPAEAELWVKKAQKTLAEDADSAALIKTAFALRLQGAK) form a domain III region.

The protein belongs to the RuvA family. Homotetramer. Forms an RuvA(8)-RuvB(12)-Holliday junction (HJ) complex. HJ DNA is sandwiched between 2 RuvA tetramers; dsDNA enters through RuvA and exits via RuvB. An RuvB hexamer assembles on each DNA strand where it exits the tetramer. Each RuvB hexamer is contacted by two RuvA subunits (via domain III) on 2 adjacent RuvB subunits; this complex drives branch migration. In the full resolvosome a probable DNA-RuvA(4)-RuvB(12)-RuvC(2) complex forms which resolves the HJ.

It localises to the cytoplasm. In terms of biological role, the RuvA-RuvB-RuvC complex processes Holliday junction (HJ) DNA during genetic recombination and DNA repair, while the RuvA-RuvB complex plays an important role in the rescue of blocked DNA replication forks via replication fork reversal (RFR). RuvA specifically binds to HJ cruciform DNA, conferring on it an open structure. The RuvB hexamer acts as an ATP-dependent pump, pulling dsDNA into and through the RuvAB complex. HJ branch migration allows RuvC to scan DNA until it finds its consensus sequence, where it cleaves and resolves the cruciform DNA. The polypeptide is Holliday junction branch migration complex subunit RuvA (Dichelobacter nodosus (strain VCS1703A)).